A 492-amino-acid polypeptide reads, in one-letter code: MIMSSTMSTEAALVPNESVFDTVSSFNEDDANYSVLDLYDDDDEGDDSSTVERKEILTTRELEKAKAFTSLIMADPENFDRYGFSKKGYFISQEEYDKWWTEYNRYTERRKKKWENFLLKNKIELHNDNPLVYPARTDELSKFVRKGIPAEWRGNAWWYFAGGQRQLDANVGVYDRLKSDCREGAVSGKDMEAIERDLYRTFPDNIHFHKESFQNGEPAIIRSLRRVLMAFSVYDKTIGYCQSMNFLVGLLLLFMEEEKAFWMLVIITGKYLPGVYESDLEGANVDQGVLVLCIKEYLPEIWSHIESSYMNGNGSTDQISGPASGEEYLCRLPTLTLCTASWFMSCFVGVVPIETTLRIWDCLFYEESHFLFKVALGILKLSESEFLESKSQKLFRQYSSYTFGGSNDSDSTFKRLKNKIKTQEEADMEILQVIQNFPKRLLNPNDIFEKVLMKKKVALNGITQEKIDRGREYVAMARNRQRASSRPKERRK.

The Rab-GAP TBC domain maps to 147–367 (GIPAEWRGNA…RIWDCLFYEE (221 aa)).

The protein localises to the cytoplasm. Its subcellular location is the bud. The protein resides in the bud neck. Its function is as follows. Regulates exocytosis by functioning as a GAP for SEC4. Also required for efficient polarization of the actin patches. The chain is GTPase-activating protein MSB4 (MSB4) from Saccharomyces cerevisiae (strain ATCC 204508 / S288c) (Baker's yeast).